The following is a 70-amino-acid chain: DNA-directed RNA polymerase subunit epsilon (70 aa).

The protein belongs to the RNA polymerase subunit epsilon family. RNAP is composed of a core of 2 alpha, a beta and a beta' subunit. The core is associated with a delta subunit, and at least one of epsilon or omega. When a sigma factor is associated with the core the holoenzyme is formed, which can initiate transcription.

The catalysed reaction is RNA(n) + a ribonucleoside 5'-triphosphate = RNA(n+1) + diphosphate. A non-essential component of RNA polymerase (RNAP). This is DNA-directed RNA polymerase subunit epsilon from Leuconostoc mesenteroides subsp. mesenteroides (strain ATCC 8293 / DSM 20343 / BCRC 11652 / CCM 1803 / JCM 6124 / NCDO 523 / NBRC 100496 / NCIMB 8023 / NCTC 12954 / NRRL B-1118 / 37Y).